The primary structure comprises 324 residues: Homocysteine S-methyltransferase 1 (324 aa).

A Hcy-binding domain is found at 6–320 (IKELIVEHPG…KDIAEIASAV (315 aa)). Residues C238, C305, and C306 each coordinate Zn(2+).

The cofactor is Zn(2+).

It localises to the cytoplasm. It catalyses the reaction S-methyl-L-methionine + L-homocysteine = 2 L-methionine + H(+). In terms of biological role, homocysteine S-methyltransferase involved in the conversion of S-adenosylmethionine (AdoMet) to methionine to control the methionine/AdoMet ratio. Also converts S-methylmethionine (SMM) to methionine. The sequence is that of Homocysteine S-methyltransferase 1 (MHT1) from Saccharomyces cerevisiae (strain ATCC 204508 / S288c) (Baker's yeast).